A 181-amino-acid chain; its full sequence is ATP synthase subunit delta (181 aa).

Belongs to the ATPase delta chain family. In terms of assembly, F-type ATPases have 2 components, F(1) - the catalytic core - and F(0) - the membrane proton channel. F(1) has five subunits: alpha(3), beta(3), gamma(1), delta(1), epsilon(1). F(0) has three main subunits: a(1), b(2) and c(10-14). The alpha and beta chains form an alternating ring which encloses part of the gamma chain. F(1) is attached to F(0) by a central stalk formed by the gamma and epsilon chains, while a peripheral stalk is formed by the delta and b chains.

The protein localises to the cell membrane. In terms of biological role, f(1)F(0) ATP synthase produces ATP from ADP in the presence of a proton or sodium gradient. F-type ATPases consist of two structural domains, F(1) containing the extramembraneous catalytic core and F(0) containing the membrane proton channel, linked together by a central stalk and a peripheral stalk. During catalysis, ATP synthesis in the catalytic domain of F(1) is coupled via a rotary mechanism of the central stalk subunits to proton translocation. Functionally, this protein is part of the stalk that links CF(0) to CF(1). It either transmits conformational changes from CF(0) to CF(1) or is implicated in proton conduction. In Mycoplasmoides gallisepticum (strain R(low / passage 15 / clone 2)) (Mycoplasma gallisepticum), this protein is ATP synthase subunit delta.